Reading from the N-terminus, the 515-residue chain is 2-isopropylmalate synthase (515 aa).

In terms of domain architecture, Pyruvate carboxyltransferase spans 4–266 (IKFFDTTLRD…ETRLNLQEIK (263 aa)). 4 residues coordinate Mn(2+): D13, H201, H203, and N237. The tract at residues 391–515 (QLSSIQVQYG…RGENEKVATP (125 aa)) is regulatory domain.

Belongs to the alpha-IPM synthase/homocitrate synthase family. LeuA type 1 subfamily. In terms of assembly, homodimer. It depends on Mn(2+) as a cofactor.

It is found in the cytoplasm. The enzyme catalyses 3-methyl-2-oxobutanoate + acetyl-CoA + H2O = (2S)-2-isopropylmalate + CoA + H(+). Its pathway is amino-acid biosynthesis; L-leucine biosynthesis; L-leucine from 3-methyl-2-oxobutanoate: step 1/4. Functionally, catalyzes the condensation of the acetyl group of acetyl-CoA with 3-methyl-2-oxobutanoate (2-ketoisovalerate) to form 3-carboxy-3-hydroxy-4-methylpentanoate (2-isopropylmalate). In Geobacillus kaustophilus (strain HTA426), this protein is 2-isopropylmalate synthase.